A 198-amino-acid chain; its full sequence is Phosphoheptose isomerase (198 aa).

In terms of domain architecture, SIS spans 36–198 (MIGSLLNNGK…DCLLLGVEDQ (163 aa)). Residue 51–53 (NGG) coordinates substrate. Positions 60 and 64 each coordinate Zn(2+). Substrate-binding positions include Glu64, 93–94 (ND), 119–121 (STS), Ser124, and Gln174. Zn(2+) contacts are provided by Gln174 and His182.

It belongs to the SIS family. GmhA subfamily. As to quaternary structure, homotetramer. Zn(2+) serves as cofactor.

It is found in the cytoplasm. It catalyses the reaction 2 D-sedoheptulose 7-phosphate = D-glycero-alpha-D-manno-heptose 7-phosphate + D-glycero-beta-D-manno-heptose 7-phosphate. The protein operates within carbohydrate biosynthesis; D-glycero-D-manno-heptose 7-phosphate biosynthesis; D-glycero-alpha-D-manno-heptose 7-phosphate and D-glycero-beta-D-manno-heptose 7-phosphate from sedoheptulose 7-phosphate: step 1/1. Its function is as follows. Catalyzes the isomerization of sedoheptulose 7-phosphate in D-glycero-D-manno-heptose 7-phosphate. The protein is Phosphoheptose isomerase of Aromatoleum aromaticum (strain DSM 19018 / LMG 30748 / EbN1) (Azoarcus sp. (strain EbN1)).